The sequence spans 190 residues: Hypoxanthine/guanine phosphoribosyltransferase (190 aa).

Belongs to the purine/pyrimidine phosphoribosyltransferase family. Archaeal HPRT subfamily. Homodimer.

Its subcellular location is the cytoplasm. It catalyses the reaction IMP + diphosphate = hypoxanthine + 5-phospho-alpha-D-ribose 1-diphosphate. The catalysed reaction is GMP + diphosphate = guanine + 5-phospho-alpha-D-ribose 1-diphosphate. It functions in the pathway purine metabolism; IMP biosynthesis via salvage pathway; IMP from hypoxanthine: step 1/1. Functionally, catalyzes a salvage reaction resulting in the formation of IMP that is energically less costly than de novo synthesis. The sequence is that of Hypoxanthine/guanine phosphoribosyltransferase from Methanohalophilus mahii (strain ATCC 35705 / DSM 5219 / SLP).